Reading from the N-terminus, the 197-residue chain is Dephospho-CoA kinase (197 aa).

A DPCK domain is found at 2 to 197; sequence IIGLTGGIAS…GAIKDLANLV (196 aa). An ATP-binding site is contributed by 10–15; it reads ASGKST.

This sequence belongs to the CoaE family.

Its subcellular location is the cytoplasm. It carries out the reaction 3'-dephospho-CoA + ATP = ADP + CoA + H(+). The protein operates within cofactor biosynthesis; coenzyme A biosynthesis; CoA from (R)-pantothenate: step 5/5. In terms of biological role, catalyzes the phosphorylation of the 3'-hydroxyl group of dephosphocoenzyme A to form coenzyme A. The sequence is that of Dephospho-CoA kinase from Streptococcus thermophilus (strain CNRZ 1066).